The primary structure comprises 427 residues: Terminal nucleotidyltransferase 5B (427 aa).

The segment at 1 to 49 (MMPSESGAESLEQPAAQVGTGAASAVATAGAAGGGPDPEASSASLGRHQ) is disordered. The segment covering 15 to 30 (AAQVGTGAASAVATAG) has biased composition (low complexity).

This sequence belongs to the TENT family.

The protein resides in the cytoplasm. It localises to the nucleus. It carries out the reaction RNA(n) + ATP = RNA(n)-3'-adenine ribonucleotide + diphosphate. Catalyzes the transfer of one adenosine molecule from an ATP to an mRNA poly(A) tail bearing a 3'-OH terminal group in an ATP hydrolysis-dependent manner. May be involved in maintaining the translation efficiency of at least some genes through preventing degradation of their mRNAs. Prefers RNA molecules that are adenosine-rich close to 3'-end. In addition, may inhibit cell proliferation and cell cycle progression through ubiquitination of beta-catenin/CTNNB1. This Mus musculus (Mouse) protein is Terminal nucleotidyltransferase 5B.